The following is a 291-amino-acid chain: Ribose-phosphate pyrophosphokinase (291 aa).

Residues 34 to 36 (DGE) and 93 to 94 (RQ) each bind ATP. Residues histidine 127 and aspartate 165 each coordinate Mg(2+). Lysine 188 is an active-site residue. D-ribose 5-phosphate-binding positions include arginine 190, aspartate 216, and 220–224 (STGGT).

Belongs to the ribose-phosphate pyrophosphokinase family. Class III (archaeal) subfamily. It depends on Mg(2+) as a cofactor.

It is found in the cytoplasm. It catalyses the reaction D-ribose 5-phosphate + ATP = 5-phospho-alpha-D-ribose 1-diphosphate + AMP + H(+). It participates in metabolic intermediate biosynthesis; 5-phospho-alpha-D-ribose 1-diphosphate biosynthesis; 5-phospho-alpha-D-ribose 1-diphosphate from D-ribose 5-phosphate (route I): step 1/1. Functionally, involved in the biosynthesis of the central metabolite phospho-alpha-D-ribosyl-1-pyrophosphate (PRPP) via the transfer of pyrophosphoryl group from ATP to 1-hydroxyl of ribose-5-phosphate (Rib-5-P). This Sulfurisphaera tokodaii (strain DSM 16993 / JCM 10545 / NBRC 100140 / 7) (Sulfolobus tokodaii) protein is Ribose-phosphate pyrophosphokinase.